Consider the following 153-residue polypeptide: Allergen Pet c 1 (153 aa).

Belongs to the BetVI family. As to quaternary structure, may form dimers.

The protein is Allergen Pet c 1 of Petroselinum crispum (Parsley).